The primary structure comprises 388 residues: Cell adhesion molecule 4 (388 aa).

A signal peptide spans 1 to 20; sequence MGRARRFQWPLLLLWAAAAG. The Ig-like V-type domain maps to 21 to 119; the sequence is PGAGQEVQTE…DTHHQIATLT (99 aa). Residues 21-324 lie on the Extracellular side of the membrane; the sequence is PGAGQEVQTE…VEAQTSVPYA (304 aa). Residues asparagine 31 and asparagine 67 are each glycosylated (N-linked (GlcNAc...) asparagine). 3 disulfides stabilise this stretch: cysteine 44/cysteine 104, cysteine 145/cysteine 199, and cysteine 245/cysteine 291. Ig-like C2-type domains are found at residues 124-219 and 224-307; these read PENP…YVLD and PTAR…YVLV. Asparagine 286 carries an N-linked (GlcNAc...) asparagine glycan. Residues 325-345 form a helical membrane-spanning segment; that stretch reads IVGGILALLVFLIICVLVGMV. Residues 346–388 are Cytoplasmic-facing; sequence WCSVRQKGSYLTHEASGLDEQGEAREAFLNGSDGHKRKEEFFI. At serine 361 the chain carries Phosphoserine.

It belongs to the nectin family. As to quaternary structure, monomer and homodimer. N-glycosylated. In terms of tissue distribution, expressed in brain, prostate, brain, kidney and some other organs.

Its subcellular location is the membrane. Its function is as follows. Involved in the cell-cell adhesion. Has calcium- and magnesium-independent cell-cell adhesion activity. May have tumor-suppressor activity. This Homo sapiens (Human) protein is Cell adhesion molecule 4 (CADM4).